The following is a 244-amino-acid chain: Phosphoadenosine 5'-phosphosulfate reductase (244 aa).

Cys239 serves as the catalytic Nucleophile; cysteine thiosulfonate intermediate.

This sequence belongs to the PAPS reductase family. CysH subfamily.

The protein localises to the cytoplasm. It carries out the reaction [thioredoxin]-disulfide + sulfite + adenosine 3',5'-bisphosphate + 2 H(+) = [thioredoxin]-dithiol + 3'-phosphoadenylyl sulfate. Its pathway is sulfur metabolism; hydrogen sulfide biosynthesis; sulfite from sulfate: step 3/3. Catalyzes the formation of sulfite from phosphoadenosine 5'-phosphosulfate (PAPS) using thioredoxin as an electron donor. This chain is Phosphoadenosine 5'-phosphosulfate reductase, found in Pectobacterium atrosepticum (strain SCRI 1043 / ATCC BAA-672) (Erwinia carotovora subsp. atroseptica).